Here is a 131-residue protein sequence, read N- to C-terminus: Global transcriptional regulator Spx (131 aa).

A disulfide bond links C10 and C13.

Belongs to the ArsC family. Spx subfamily. Interacts with the C-terminal domain of the alpha subunit of the RNAP.

It localises to the cytoplasm. With respect to regulation, under non-stress conditions, Spx is degraded by ClpXP. Efficient degradation by ClpXP requires the adapter protein SpxH/YjbH. Function, levels and solubility of Spx are affected by SpxH/YjbH aggregation and stress conditions. Its function is as follows. Global transcriptional regulator that plays a key role in stress response and exerts either positive or negative regulation of genes. Acts by interacting with the C-terminal domain of the alpha subunit of the RNA polymerase (RNAP). This interaction can enhance binding of RNAP to the promoter region of target genes and stimulate their transcription, or block interaction of RNAP with activator proteins and repress transcription. Functionally, required for transcription of thioredoxin reductase (trxB). Modulates the expression of icaR, encoding a repressor of the biofilm operon icaADBC. Also controls the transcription of trfA, a gene implicated in cell wall antibiotic resistance, which in turn is required for degradation of MazE antitoxin, the unstable component of the MazEF toxin-antitoxin system, that neutralizes the endoribonuclease activity of MazF toxin. In Staphylococcus aureus (strain NCTC 8325 / PS 47), this protein is Global transcriptional regulator Spx.